Here is a 126-residue protein sequence, read N- to C-terminus: uncharacterized protein (126 aa).

In terms of domain architecture, HTH hxlR-type spans 20–118; it reads CPSREVLKHV…WIELNLPEVL (99 aa).

This is an uncharacterized protein from Escherichia coli (strain K12).